The sequence spans 981 residues: uncharacterized protein (981 aa).

The region spanning 535–612 (VLLNPVAIEI…SIASIIQKKS (78 aa)) is the Carrier domain. Serine 571 is subject to O-(pantetheine 4'-phosphoryl)serine.

The protein belongs to the ATP-dependent AMP-binding enzyme family.

This is an uncharacterized protein from Schizosaccharomyces pombe (strain 972 / ATCC 24843) (Fission yeast).